The chain runs to 230 residues: Thymidylate kinase (230 aa).

20-27 (GGEGAGKS) is a binding site for ATP.

This sequence belongs to the thymidylate kinase family.

It catalyses the reaction dTMP + ATP = dTDP + ADP. Phosphorylation of dTMP to form dTDP in both de novo and salvage pathways of dTTP synthesis. The sequence is that of Thymidylate kinase from Rhodopseudomonas palustris (strain ATCC BAA-98 / CGA009).